A 221-amino-acid chain; its full sequence is Phosphoribosylformylglycinamidine synthase subunit PurQ (221 aa).

The region spanning 8–221 (NVGIIRFPGT…GLKFFKSFLD (214 aa)) is the Glutamine amidotransferase type-1 domain. Cysteine 91 (nucleophile) is an active-site residue. Active-site residues include histidine 198 and glutamate 200.

In terms of assembly, part of the FGAM synthase complex composed of 1 PurL, 1 PurQ and 2 PurS subunits.

Its subcellular location is the cytoplasm. The enzyme catalyses N(2)-formyl-N(1)-(5-phospho-beta-D-ribosyl)glycinamide + L-glutamine + ATP + H2O = 2-formamido-N(1)-(5-O-phospho-beta-D-ribosyl)acetamidine + L-glutamate + ADP + phosphate + H(+). It catalyses the reaction L-glutamine + H2O = L-glutamate + NH4(+). It functions in the pathway purine metabolism; IMP biosynthesis via de novo pathway; 5-amino-1-(5-phospho-D-ribosyl)imidazole from N(2)-formyl-N(1)-(5-phospho-D-ribosyl)glycinamide: step 1/2. In terms of biological role, part of the phosphoribosylformylglycinamidine synthase complex involved in the purines biosynthetic pathway. Catalyzes the ATP-dependent conversion of formylglycinamide ribonucleotide (FGAR) and glutamine to yield formylglycinamidine ribonucleotide (FGAM) and glutamate. The FGAM synthase complex is composed of three subunits. PurQ produces an ammonia molecule by converting glutamine to glutamate. PurL transfers the ammonia molecule to FGAR to form FGAM in an ATP-dependent manner. PurS interacts with PurQ and PurL and is thought to assist in the transfer of the ammonia molecule from PurQ to PurL. The chain is Phosphoribosylformylglycinamidine synthase subunit PurQ from Methanosphaera stadtmanae (strain ATCC 43021 / DSM 3091 / JCM 11832 / MCB-3).